A 102-amino-acid chain; its full sequence is NADH-quinone oxidoreductase subunit K (102 aa).

The next 3 membrane-spanning stretches (helical) occupy residues 5–25, 30–50, and 62–82; these read LSHF…GIIL, IIVV…NLVS, and VFSL…LAIL.

This sequence belongs to the complex I subunit 4L family. In terms of assembly, NDH-1 is composed of 14 different subunits. Subunits NuoA, H, J, K, L, M, N constitute the membrane sector of the complex.

The protein localises to the cell inner membrane. It carries out the reaction a quinone + NADH + 5 H(+)(in) = a quinol + NAD(+) + 4 H(+)(out). Its function is as follows. NDH-1 shuttles electrons from NADH, via FMN and iron-sulfur (Fe-S) centers, to quinones in the respiratory chain. The immediate electron acceptor for the enzyme in this species is believed to be ubiquinone. Couples the redox reaction to proton translocation (for every two electrons transferred, four hydrogen ions are translocated across the cytoplasmic membrane), and thus conserves the redox energy in a proton gradient. The protein is NADH-quinone oxidoreductase subunit K of Methylocella silvestris (strain DSM 15510 / CIP 108128 / LMG 27833 / NCIMB 13906 / BL2).